We begin with the raw amino-acid sequence, 287 residues long: Probable aquaporin PIP1-5 (287 aa).

Methionine 1 is modified (N-acetylmethionine). Positions 1–34 (MEGKEEDVNVGANKFPERQPIGTAAQTESKDYKE) are disordered. Topologically, residues 1–55 (MEGKEEDVNVGANKFPERQPIGTAAQTESKDYKEPPPAPFFEPGELKSWSFYRAG) are cytoplasmic. A helical transmembrane segment spans residues 56–76 (IAEFIATFLFLYVTVLTVMGV). At 77 to 92 (KRAPNMCASVGIQGIA) the chain is on the extracellular side. The chain crosses the membrane as a helical span at residues 93–113 (WAFGGMIFALVYCTAGISGGH). Residues 114 to 133 (INPAVTFGLFLARKLSLTRA) lie on the Cytoplasmic side of the membrane. The NPA 1 motif lies at 115–117 (NPA). The chain crosses the membrane as a helical span at residues 134–154 (LFYIVMQCLGAICGAGVVKGF). Topologically, residues 155 to 175 (QPGLYQTNGGGANVVAHGYTK) are extracellular. A helical membrane pass occupies residues 176 to 196 (GSGLGAEIVGTFVLVYTVFSA). Over 197–209 (TDAKRSARDSHVP) the chain is Cytoplasmic. The chain crosses the membrane as a helical span at residues 210 to 230 (ILAPLPIGFAVFLVHLATIPI). Residues 231–257 (TGTGINPARSLGAAIIYNKDHAWDDHW) are Extracellular-facing. The NPA 2 motif lies at 236 to 238 (NPA). The helical transmembrane segment at 258–278 (IFWVGPFIGAALAALYHQIVI) threads the bilayer. Residues 279 to 287 (RAIPFKSKT) are Cytoplasmic-facing. Serine 285 is modified (phosphoserine).

The protein belongs to the MIP/aquaporin (TC 1.A.8) family. PIP (TC 1.A.8.11) subfamily. In terms of tissue distribution, predominantly expressed in green siliques. Also expressed above ground, in roots and flower buds.

The protein resides in the cell membrane. In terms of biological role, aquaporins facilitate the transport of water and small neutral solutes across cell membranes. This chain is Probable aquaporin PIP1-5 (PIP1-5), found in Arabidopsis thaliana (Mouse-ear cress).